A 404-amino-acid polypeptide reads, in one-letter code: Cytoplasmic tRNA 2-thiolation protein 2 (404 aa).

It belongs to the CTU2/NCS2 family.

The protein localises to the cytoplasm. The protein operates within tRNA modification; 5-methoxycarbonylmethyl-2-thiouridine-tRNA biosynthesis. In terms of biological role, plays a central role in 2-thiolation of mcm(5)S(2)U at tRNA wobble positions of tRNA(Lys), tRNA(Glu) and tRNA(Gln). May act by forming a heterodimer with NCS6/CTU1 that ligates sulfur from thiocarboxylated URM1 onto the uridine of tRNAs at wobble position. The polypeptide is Cytoplasmic tRNA 2-thiolation protein 2 (Drosophila erecta (Fruit fly)).